A 173-amino-acid polypeptide reads, in one-letter code: UPF0316 protein Amet_0954 (173 aa).

3 helical membrane passes run L3 to V23, A38 to L58, and P61 to I81.

It belongs to the UPF0316 family.

Its subcellular location is the cell membrane. The sequence is that of UPF0316 protein Amet_0954 from Alkaliphilus metalliredigens (strain QYMF).